Consider the following 481-residue polypeptide: Xylulose kinase (481 aa).

Residue 81-82 (QH) coordinates substrate. Aspartate 239 acts as the Proton acceptor in catalysis.

Belongs to the FGGY kinase family.

The enzyme catalyses D-xylulose + ATP = D-xylulose 5-phosphate + ADP + H(+). In terms of biological role, catalyzes the phosphorylation of D-xylulose to D-xylulose 5-phosphate. The protein is Xylulose kinase of Streptomyces coelicolor (strain ATCC BAA-471 / A3(2) / M145).